Here is a 360-residue protein sequence, read N- to C-terminus: DNA replication and repair protein RecF (360 aa).

An ATP-binding site is contributed by Gly-30–Thr-37.

Belongs to the RecF family.

It is found in the cytoplasm. Functionally, the RecF protein is involved in DNA metabolism; it is required for DNA replication and normal SOS inducibility. RecF binds preferentially to single-stranded, linear DNA. It also seems to bind ATP. This chain is DNA replication and repair protein RecF, found in Thioalkalivibrio sulfidiphilus (strain HL-EbGR7).